Reading from the N-terminus, the 206-residue chain is MLKKLDSLLTVAGITLPDQQKHQLIGYVELLDKWNKAYNLTSVRDPQQMLVRHILDSIVVNPHLQGSRFIDVGTGPGLPGIPLAIVRPDAHFTLLDSLGKRVRFLRQVQHELGLNNIELVQSRVEAFTSEPPFDGVISRAFASLQDMLSWCHHLPAKPEGRFYALKGVRPDDELAVLPEDIVLESVIKLDVPELDGERHLIILKSN.

S-adenosyl-L-methionine is bound by residues Gly73, Leu78, Val124–Glu125, and Arg139.

Belongs to the methyltransferase superfamily. RNA methyltransferase RsmG family.

It is found in the cytoplasm. The catalysed reaction is guanosine(527) in 16S rRNA + S-adenosyl-L-methionine = N(7)-methylguanosine(527) in 16S rRNA + S-adenosyl-L-homocysteine. Functionally, specifically methylates the N7 position of guanine in position 527 of 16S rRNA. The sequence is that of Ribosomal RNA small subunit methyltransferase G from Yersinia pseudotuberculosis serotype O:3 (strain YPIII).